Here is an 80-residue protein sequence, read N- to C-terminus: Acyl carrier protein (80 aa).

The Carrier domain occupies 4-79 (EAILEKVRSI…DAVKYIEDKQ (76 aa)). At S39 the chain carries O-(pantetheine 4'-phosphoryl)serine.

It belongs to the acyl carrier protein (ACP) family. 4'-phosphopantetheine is transferred from CoA to a specific serine of apo-ACP by AcpS. This modification is essential for activity because fatty acids are bound in thioester linkage to the sulfhydryl of the prosthetic group.

Its subcellular location is the cytoplasm. The protein operates within lipid metabolism; fatty acid biosynthesis. Carrier of the growing fatty acid chain in fatty acid biosynthesis. The protein is Acyl carrier protein of Parasynechococcus marenigrum (strain WH8102).